The sequence spans 263 residues: Chymotrypsinogen B (263 aa).

An N-terminal signal peptide occupies residues 1-18; that stretch reads MASLWLLSCFSLVGAAFG. Disulfide bonds link cysteine 19/cysteine 140, cysteine 60/cysteine 76, cysteine 154/cysteine 219, cysteine 186/cysteine 200, and cysteine 209/cysteine 238. The region spanning 34–261 is the Peptidase S1 domain; the sequence is IVNGEDAVPG…LIPWVQKILA (228 aa). The active-site Charge relay system is histidine 75. Residue serine 93 is modified to Phosphoserine. Aspartate 120 acts as the Charge relay system in catalysis. Catalysis depends on serine 213, which acts as the Charge relay system.

The protein belongs to the peptidase S1 family.

It localises to the secreted. The protein resides in the extracellular space. It catalyses the reaction Preferential cleavage: Tyr-|-Xaa, Trp-|-Xaa, Phe-|-Xaa, Leu-|-Xaa.. The polypeptide is Chymotrypsinogen B (Homo sapiens (Human)).